The primary structure comprises 199 residues: Photosystem I reaction center subunit XI (199 aa).

2 consecutive transmembrane segments (helical) span residues 108 to 128 (LTAG…LLVL) and 165 to 185 (FWLG…TLHL).

Belongs to the PsaL family.

It is found in the cellular thylakoid membrane. This chain is Photosystem I reaction center subunit XI, found in Prochlorococcus marinus (strain AS9601).